A 253-amino-acid polypeptide reads, in one-letter code: 5'-nucleotidase SurE (253 aa).

4 residues coordinate a divalent metal cation: Asp8, Asp9, Ser39, and Asn95.

Belongs to the SurE nucleotidase family. Requires a divalent metal cation as cofactor.

It is found in the cytoplasm. It catalyses the reaction a ribonucleoside 5'-phosphate + H2O = a ribonucleoside + phosphate. Its function is as follows. Nucleotidase that shows phosphatase activity on nucleoside 5'-monophosphates. The sequence is that of 5'-nucleotidase SurE from Chloroflexus aggregans (strain MD-66 / DSM 9485).